The chain runs to 230 residues: Flagellar L-ring protein (230 aa).

The N-terminal stretch at M1 to G22 is a signal peptide. C23 carries the N-palmitoyl cysteine lipid modification. A lipid anchor (S-diacylglycerol cysteine) is attached at C23.

It belongs to the FlgH family. In terms of assembly, the basal body constitutes a major portion of the flagellar organelle and consists of four rings (L,P,S, and M) mounted on a central rod.

The protein localises to the cell outer membrane. Its subcellular location is the bacterial flagellum basal body. Its function is as follows. Assembles around the rod to form the L-ring and probably protects the motor/basal body from shearing forces during rotation. The chain is Flagellar L-ring protein from Stenotrophomonas maltophilia (strain K279a).